Reading from the N-terminus, the 107-residue chain is Quaternary ammonium compound-resistance protein QacG (107 aa).

A run of 4 helical transmembrane segments spans residues methionine 1–lysine 21, phenylalanine 26–leucine 46, isoleucine 57–valine 77, and leucine 84–glycine 104.

The protein belongs to the drug/metabolite transporter (DMT) superfamily. Small multidrug resistance (SMR) (TC 2.A.7.1) family.

It is found in the cell membrane. Its function is as follows. Multidrug exporter. Is implicated for the resistance to bacteriocidal quaternary ammonium compounds. The polypeptide is Quaternary ammonium compound-resistance protein QacG (qacG) (Staphylococcus sp. (strain ST94)).